The sequence spans 404 residues: Short chain dehydrogenase sirR (404 aa).

The signal sequence occupies residues 1-28; the sequence is MHSKPQRALVIGATGVSGWSLCLQLLQT. NADP(+) contacts are provided by Ser56 and Leu58. 2 N-linked (GlcNAc...) asparagine glycosylation sites follow: Asn67 and Asn157. The Proton donor role is filled by Ser237. Asn274 carries an N-linked (GlcNAc...) asparagine glycan. An NADP(+)-binding site is contributed by Val291.

Belongs to the short-chain dehydrogenases/reductases (SDR) family. Highly divergent.

It functions in the pathway mycotoxin biosynthesis. Short chain dehydrogenase; part of the gene cluster that mediates the biosynthesis of sirodesmin PL, an epipolythiodioxopiperazine (ETP) characterized by a disulfide bridged cyclic dipeptide and that acts as a phytotoxin which is involved in the blackleg didease of canola. SirD catalyzes the O-prenylation of L-tyrosine (L-Tyr) in the presence of dimethylallyl diphosphate (DMAPP) to yield 4-O-dimethylallyl-L-Tyr, and therefore represents probably the first pathway-specific enzyme in the biosynthesis of sirodesmin PL. 4-O-dimethylallyl-L-Tyr, then undergoes condensation with L-Ser in a reaction catalyzed by the non-ribosomal peptide synthase sirP to form the diketopiperazine (DKP) backbone. Further bishydroxylation of the DKP performed by the cytochrome P450 monooxygenase sirC leads to the production of the intermediate phomamide. This step is essential to form the reactive thiol group required for toxicity of sirodesmin PL. The next steps of sirodesmin biosynthesis are not well understood yet, but some predictions could be made from intermediate compounds identification. Phomamide is converted into phomalizarine via oxidation, probably by sirT. Further oxidation, methylation (by sirM or sirN) and reduction steps convert phomalizarine to deacetyl sirodesmin. Finally, acetyltransferase sirH probably acetylates deacetyl sirodesmin to produce sirodesmin PL. This chain is Short chain dehydrogenase sirR, found in Leptosphaeria maculans (Blackleg fungus).